Reading from the N-terminus, the 600-residue chain is Cytidine monophosphate-N-acetylneuraminic acid hydroxylase (600 aa).

Residues Leu9 to Leu107 enclose the Rieske domain. [2Fe-2S] cluster-binding residues include Cys49, His51, Cys70, and His73.

Belongs to the CMP-Neu5Ac hydroxylase family. It depends on [2Fe-2S] cluster as a cofactor.

Its subcellular location is the cytoplasm. It catalyses the reaction CMP-N-acetyl-beta-neuraminate + 2 Fe(II)-[cytochrome b5] + O2 + 2 H(+) = CMP-N-glycoloyl-beta-neuraminate + 2 Fe(III)-[cytochrome b5] + H2O. The protein operates within amino-sugar metabolism; N-acetylneuraminate metabolism. In terms of biological role, sialic acids are components of carbohydrate chains of glycoconjugates and are involved in cell-cell recognition and cell-pathogen interactions. Catalyzes the conversion of CMP-N-acetylneuraminic acid (CMP-Neu5Ac) into its hydroxylated derivative CMP-N-glycolylneuraminic acid (CMP-Neu5Gc), a sialic acid abundantly expressed at the surface of many cells. This chain is Cytidine monophosphate-N-acetylneuraminic acid hydroxylase (CMAH), found in Gorilla gorilla gorilla (Western lowland gorilla).